The primary structure comprises 212 residues: ER lumen protein-retaining receptor (212 aa).

At 1–2 the chain is on the lumenal side; sequence MN. Residues 3–21 form a helical membrane-spanning segment; sequence IFRFAGDLSHVFAIIILLL. The Cytoplasmic portion of the chain corresponds to 22 to 35; the sequence is KIWKTRSCAGISGK. A helical membrane pass occupies residues 36–53; that stretch reads SQILFAVVYLTRYLDLFT. Over 54-61 the chain is Lumenal; sequence TYVSLYNS. Residues 62 to 80 traverse the membrane as a helical segment; that stretch reads VMKVLFLATSGATVYLMYV. Topologically, residues 81 to 96 are cytoplasmic; it reads KFKATYDHNHDSFRIE. The chain crosses the membrane as a helical span at residues 97 to 110; that stretch reads FLLVPCALLSLVIN. At 111 to 117 the chain is on the lumenal side; the sequence is HEFTVME. Residues 118-137 traverse the membrane as a helical segment; sequence VLWTFSIYLESVAILPQLFL. Residues 138–149 lie on the Cytoplasmic side of the membrane; sequence VSRTGEAESITS. A helical membrane pass occupies residues 150–168; it reads HYLFALGSYRALYLLNWVY. Residues 169-178 are Lumenal-facing; the sequence is RYMVESHYDL. Residues 179–199 traverse the membrane as a helical segment; that stretch reads IAIFAGVVQTVLYCDFFYLYI. Topologically, residues 200-212 are cytoplasmic; it reads TKVLKGKKLQLPA.

The protein belongs to the ERD2 family.

The protein resides in the endoplasmic reticulum membrane. Functionally, required for the retention of luminal endoplasmic reticulum proteins. Determines the specificity of the luminal ER protein retention system. Also required for normal vesicular traffic through the Golgi. This Drosophila melanogaster (Fruit fly) protein is ER lumen protein-retaining receptor (KdelR).